We begin with the raw amino-acid sequence, 291 residues long: Tetrahydromethanopterin:alpha-L-glutamate ligase (291 aa).

One can recognise an ATP-grasp domain in the interval 101 to 286; sequence SVFLELNNLP…IADKLLEKII (186 aa). ATP is bound by residues K136, 175–187, and R203; that span reads QEFIKPVRNEHRD. Residues D247, E259, and N261 each coordinate Mg(2+). The Mn(2+) site is built by D247, E259, and N261.

This sequence belongs to the RimK family. MptN subfamily. Homodimer. Mg(2+) is required as a cofactor. Requires Mn(2+) as cofactor.

It catalyses the reaction 5,6,7,8-tetrahydromethanopterin + L-glutamate + ATP = 5,6,7,8-tetrahydrosarcinapterin + ADP + phosphate + H(+). Its pathway is cofactor biosynthesis; 5,6,7,8-tetrahydrosarcinapterin biosynthesis. Its function is as follows. Catalyzes the ATP or GTP-dependent addition of one L-glutamate molecule to tetrahydromethanopterin, producing tetrahydrosarcinapterin. This Methanocaldococcus jannaschii (strain ATCC 43067 / DSM 2661 / JAL-1 / JCM 10045 / NBRC 100440) (Methanococcus jannaschii) protein is Tetrahydromethanopterin:alpha-L-glutamate ligase (mptN).